The chain runs to 334 residues: Beta-hexosaminidase (334 aa).

Substrate-binding positions include D57, R65, R128, and 158-159; that span reads KH. H171 serves as the catalytic Proton donor/acceptor. D242 acts as the Nucleophile in catalysis.

The protein belongs to the glycosyl hydrolase 3 family. NagZ subfamily.

The protein localises to the cytoplasm. It carries out the reaction Hydrolysis of terminal non-reducing N-acetyl-D-hexosamine residues in N-acetyl-beta-D-hexosaminides.. Its pathway is cell wall biogenesis; peptidoglycan recycling. Its function is as follows. Plays a role in peptidoglycan recycling by cleaving the terminal beta-1,4-linked N-acetylglucosamine (GlcNAc) from peptide-linked peptidoglycan fragments, giving rise to free GlcNAc, anhydro-N-acetylmuramic acid and anhydro-N-acetylmuramic acid-linked peptides. This is Beta-hexosaminidase from Methylococcus capsulatus (strain ATCC 33009 / NCIMB 11132 / Bath).